The primary structure comprises 432 residues: Glutamate--tRNA ligase 2 (432 aa).

A 'HIGH' region motif is present at residues 6–16 (PSPTGDMHIGN). Residues 235 to 239 (KMSKR) carry the 'KMSKS' region motif. Lys238 lines the ATP pocket.

Belongs to the class-I aminoacyl-tRNA synthetase family. Glutamate--tRNA ligase type 1 subfamily. As to quaternary structure, monomer.

It localises to the cytoplasm. It catalyses the reaction tRNA(Glu) + L-glutamate + ATP = L-glutamyl-tRNA(Glu) + AMP + diphosphate. Its function is as follows. Catalyzes the attachment of glutamate to tRNA(Glu) in a two-step reaction: glutamate is first activated by ATP to form Glu-AMP and then transferred to the acceptor end of tRNA(Glu). This Sulfurimonas denitrificans (strain ATCC 33889 / DSM 1251) (Thiomicrospira denitrificans (strain ATCC 33889 / DSM 1251)) protein is Glutamate--tRNA ligase 2.